Reading from the N-terminus, the 129-residue chain is MNKVQNIIDQLKDLTLLEAADLVKQIEETFNVSATAAAAPINMVAATAGAGSAEAVEEKTEFDLILEDVPADKKIAVLKVVRGLTGLGLKEAKDLVEAAPKPIKEGMSKADAEAGKKQLEEAGAKATLK.

Positions 101–123 are enriched in basic and acidic residues; that stretch reads KPIKEGMSKADAEAGKKQLEEAG. The disordered stretch occupies residues 101-129; it reads KPIKEGMSKADAEAGKKQLEEAGAKATLK.

The protein belongs to the bacterial ribosomal protein bL12 family. As to quaternary structure, homodimer. Part of the ribosomal stalk of the 50S ribosomal subunit. Forms a multimeric L10(L12)X complex, where L10 forms an elongated spine to which 2 to 4 L12 dimers bind in a sequential fashion. Binds GTP-bound translation factors.

It localises to the plastid. The protein resides in the chloroplast. In terms of biological role, forms part of the ribosomal stalk which helps the ribosome interact with GTP-bound translation factors. Is thus essential for accurate translation. In Guillardia theta (Cryptophyte), this protein is Large ribosomal subunit protein bL12c.